Consider the following 225-residue polypeptide: 2-C-methyl-D-erythritol 4-phosphate cytidylyltransferase (225 aa).

Belongs to the IspD/TarI cytidylyltransferase family. IspD subfamily.

It carries out the reaction 2-C-methyl-D-erythritol 4-phosphate + CTP + H(+) = 4-CDP-2-C-methyl-D-erythritol + diphosphate. It functions in the pathway isoprenoid biosynthesis; isopentenyl diphosphate biosynthesis via DXP pathway; isopentenyl diphosphate from 1-deoxy-D-xylulose 5-phosphate: step 2/6. Catalyzes the formation of 4-diphosphocytidyl-2-C-methyl-D-erythritol from CTP and 2-C-methyl-D-erythritol 4-phosphate (MEP). This is 2-C-methyl-D-erythritol 4-phosphate cytidylyltransferase from Chromobacterium violaceum (strain ATCC 12472 / DSM 30191 / JCM 1249 / CCUG 213 / NBRC 12614 / NCIMB 9131 / NCTC 9757 / MK).